Reading from the N-terminus, the 103-residue chain is Large ribosomal subunit protein bL21 (103 aa).

This sequence belongs to the bacterial ribosomal protein bL21 family. In terms of assembly, part of the 50S ribosomal subunit. Contacts protein L20.

This protein binds to 23S rRNA in the presence of protein L20. In Vibrio parahaemolyticus serotype O3:K6 (strain RIMD 2210633), this protein is Large ribosomal subunit protein bL21.